Here is a 105-residue protein sequence, read N- to C-terminus: Ig lambda-1 chain C region (105 aa).

Residues 6–100 (PSVTLFPPSS…EGHTVEKSLS (95 aa)) enclose the Ig-like domain. Cys-27 and Cys-86 are joined by a disulfide.

The chain is Ig lambda-1 chain C region from Mus musculus (Mouse).